A 65-amino-acid polypeptide reads, in one-letter code: Large ribosomal subunit protein bL35 (65 aa).

It belongs to the bacterial ribosomal protein bL35 family.

This Syntrophobacter fumaroxidans (strain DSM 10017 / MPOB) protein is Large ribosomal subunit protein bL35.